We begin with the raw amino-acid sequence, 958 residues long: Dermatan-sulfate epimerase (958 aa).

A signal peptide spans Met1–Ala22. Topologically, residues Tyr23 to Arg902 are lumenal. A glycan (N-linked (GlcNAc...) (complex) asparagine) is linked at Asn183. The active-site Proton donor is His205. Tyr261 is an active-site residue. An N-linked (GlcNAc...) (high mannose) asparagine glycan is attached at Asn336. Asn411 is a glycosylation site (N-linked (GlcNAc...) (complex) asparagine). Mn(2+)-binding residues include His452 and Glu470. Tyr473 is an active-site residue. A Mn(2+)-binding site is contributed by Asn481. A glycan (N-linked (GlcNAc...) (complex) asparagine) is linked at Asn642. N-linked (GlcNAc...) (paucimannose) asparagine glycosylation is present at Asn648. Residues Leu903 to Phe923 form a helical membrane-spanning segment. Residues Gln924–Arg933 are Cytoplasmic-facing. The helical transmembrane segment at Cys934–Ser954 threads the bilayer. Residues Gln955–Cys958 lie on the Lumenal side of the membrane.

Belongs to the dermatan-sulfate isomerase family. It depends on Mn(2+) as a cofactor. Post-translationally, N-glycosylated. Glycosylation is important for enzymatic activity. As to expression, ubiquitously expressed with higher expression in kidney and ovary and lower expression in brain, colon and thymus. Also expressed in renal cell carcinomas, brain tumors, and in a part of melanomas and adenocarcinomas from organs other than the breast. Expressed in squamous cell carcinomas (SCC), glioma, and some adenocarcinoma cell lines, but not in breast cancer cell lines or any normal tissues (at protein level).

It is found in the endoplasmic reticulum membrane. Its subcellular location is the golgi apparatus membrane. It localises to the cytoplasmic vesicle membrane. The protein localises to the microsome membrane. The enzyme catalyses chondroitin 4'-sulfate = dermatan 4'-sulfate. The protein operates within glycan metabolism; chondroitin sulfate biosynthesis. It functions in the pathway glycan metabolism; heparan sulfate biosynthesis. In terms of biological role, converts D-glucuronic acid to L-iduronic acid (IdoUA) residues. Plays an important role in the biosynthesis of the glycosaminoglycan/mucopolysaccharide dermatan sulfate. The sequence is that of Dermatan-sulfate epimerase (DSE) from Homo sapiens (Human).